Reading from the N-terminus, the 1157-residue chain is Folliculin-interacting protein 1 (1157 aa).

The uDENN FNIP1/2-type domain maps to 37 to 467 (FDPSQIRLIV…TVMPNGQPPI (431 aa)). Disordered regions lie at residues 92-120 (PGGD…CPKY), 616-665 (SQQE…TKVE), 769-796 (SPPT…NRDC), and 904-955 (VPHG…NYYG). Residues 95–111 (DSSSSLDSSINSSSSFS) show a composition bias toward low complexity. The cDENN FNIP1/2-type domain occupies 475–1083 (SSQSVDMLAK…VSNLLHSTLQ (609 aa)). Over residues 651–664 (ADGHQPRTCQDTKV) the composition is skewed to basic and acidic residues. Residues 904–916 (VPHGDRENAEKKV) show a composition bias toward basic and acidic residues. A dDENN FNIP1/2-type domain is found at 1093–1148 (FCVMHLEDRLQELYFKSKMLSEYLKGQMRVHVKELGVVLGIESSDLPLLAAVASTH).

It belongs to the FNIP family. In terms of assembly, homodimer and homomultimer. Heterodimer and heteromultimer with FNIP2. Component of the lysosomal folliculin complex (LFC).

The protein resides in the lysosome membrane. The protein localises to the cytoplasm. It localises to the cytosol. Functionally, binding partner of the GTPase-activating protein FLCN: involved in the cellular response to amino acid availability by regulating the non-canonical mTORC1 signaling cascade controlling the MiT/TFE factors TFEB and TFE3. Required to promote FLCN recruitment to lysosomes and interaction with Rag GTPases, leading to activation of the non-canonical mTORC1 signaling. In low-amino acid conditions, component of the lysosomal folliculin complex (LFC) on the membrane of lysosomes, which inhibits the GTPase-activating activity of FLCN, thereby inactivating mTORC1 and promoting nuclear translocation of TFEB and TFE3. Upon amino acid restimulation, disassembly of the LFC complex liberates the GTPase-activating activity of FLCN, leading to activation of mTORC1 and subsequent inactivation of TFEB and TFE3. In addition to its role in mTORC1 signaling, also acts as a co-chaperone of HSP90AA1/Hsp90: inhibits the ATPase activity of HSP90AA1/Hsp90, leading to activate both kinase and non-kinase client proteins of HSP90AA1/Hsp90. Acts as a scaffold to load client protein FLCN onto HSP90AA1/Hsp90. In Gallus gallus (Chicken), this protein is Folliculin-interacting protein 1.